The following is a 405-amino-acid chain: 3-hydroxy-3-methylglutaryl-coenzyme A reductase (405 aa).

Residues Glu-100 and Asp-310 each act as charge relay system in the active site. Catalysis depends on His-400, which acts as the Proton donor.

The protein belongs to the HMG-CoA reductase family.

The enzyme catalyses (R)-mevalonate + 2 NADP(+) + CoA = (3S)-3-hydroxy-3-methylglutaryl-CoA + 2 NADPH + 2 H(+). Its pathway is metabolic intermediate biosynthesis; (R)-mevalonate biosynthesis; (R)-mevalonate from acetyl-CoA: step 3/3. Its function is as follows. Converts HMG-CoA to mevalonate. This is 3-hydroxy-3-methylglutaryl-coenzyme A reductase (hmgA) from Methanocaldococcus jannaschii (strain ATCC 43067 / DSM 2661 / JAL-1 / JCM 10045 / NBRC 100440) (Methanococcus jannaschii).